We begin with the raw amino-acid sequence, 101 residues long: Protein PrgJ (101 aa).

This sequence to S.flexneri MxiI.

Functionally, required for invasion of epithelial cells. The chain is Protein PrgJ (prgJ) from Salmonella typhimurium (strain LT2 / SGSC1412 / ATCC 700720).